The primary structure comprises 132 residues: Small ribosomal subunit protein uS8 (132 aa).

The protein belongs to the universal ribosomal protein uS8 family. In terms of assembly, part of the 30S ribosomal subunit. Contacts proteins S5 and S12.

Functionally, one of the primary rRNA binding proteins, it binds directly to 16S rRNA central domain where it helps coordinate assembly of the platform of the 30S subunit. This Alkaliphilus metalliredigens (strain QYMF) protein is Small ribosomal subunit protein uS8.